The sequence spans 268 residues: Undecaprenyl-diphosphatase (268 aa).

7 consecutive transmembrane segments (helical) span residues 5–25 (SIIS…IPVS), 43–63 (GNTF…LVYF), 84–104 (FSVL…HGFI), 106–126 (AVLF…GVIL), 184–204 (AAEF…TLDL), 213–233 (FDDI…GIVV), and 248–268 (PFAI…WLVG).

Belongs to the UppP family.

The protein resides in the cell inner membrane. It carries out the reaction di-trans,octa-cis-undecaprenyl diphosphate + H2O = di-trans,octa-cis-undecaprenyl phosphate + phosphate + H(+). Catalyzes the dephosphorylation of undecaprenyl diphosphate (UPP). Confers resistance to bacitracin. This Sinorhizobium fredii (strain NBRC 101917 / NGR234) protein is Undecaprenyl-diphosphatase.